A 509-amino-acid polypeptide reads, in one-letter code: GRAS family protein RAD1 (509 aa).

The GRAS domain occupies 125–508; that stretch reads EDGCADGMRL…KPIVAASCWK (384 aa). The segment at 132-198 is leucine repeat I (LRI); that stretch reads MRLVQLLIAC…IQPIGSGAGV (67 aa). Positions 217–286 are VHIID; it reads YRLVYETCPH…SGHGRVRRLR (70 aa). Positions 248–252 match the VHIID motif; sequence VHVVD. The segment at 299 to 331 is leucine repeat II (LRII); it reads AIGDELSDYANNLGINLEFSVVQKNLENLQPED. Residues 340 to 431 are PFYRE; it reads LVVNSILQLH…QFYFAEEIKN (92 aa). The SAW stretch occupies residues 434–508; sequence SCEGPLRMER…KPIVAASCWK (75 aa).

It belongs to the GRAS family. In terms of assembly, interacts with RAM1 and NSP2. In terms of tissue distribution, expressed in roots under low phosphate (Pi) conditions.

The protein resides in the nucleus. In terms of biological role, transcription factor acting as a regulator of arbuscular mycorrhiza (AM)-related genes (e.g. PT4, STR and RAM2). Required for the morphogenesis of arbuscules upon symbiosis with AM fungi (e.g. Rhizophagus irregularis). Also involved in restricting mycorrhizal colonization of the root meristem. This Lotus japonicus (Lotus corniculatus var. japonicus) protein is GRAS family protein RAD1.